A 566-amino-acid polypeptide reads, in one-letter code: Putative ABC transporter ATP-binding protein BA_2641/GBAA_2641/BAS2461 (566 aa).

2 ABC transporter domains span residues 5-246 and 300-533; these read ISFE…GLRE and LKVE…ANLK. ATP is bound by residues 39-46 and 333-340; these read GRSGSGKS and GHNGAGKS.

Belongs to the ABC transporter superfamily.

The protein localises to the cell membrane. Its function is as follows. Probably part of an ABC transporter complex. Responsible for energy coupling to the transport system. This is Putative ABC transporter ATP-binding protein BA_2641/GBAA_2641/BAS2461 from Bacillus anthracis.